The following is a 215-amino-acid chain: Cytochrome b6 (215 aa).

A helical membrane pass occupies residues 32-52; that stretch reads IFYCLGGITLTCFLIQFATGF. Cys35 lines the heme c pocket. Positions 86 and 100 each coordinate heme b. 3 consecutive transmembrane segments (helical) span residues 90 to 110, 116 to 136, and 186 to 206; these read ASMM…TGGF, LTWV…VTGY, and LHTF…FLMI. Heme b-binding residues include His187 and His202.

The protein belongs to the cytochrome b family. PetB subfamily. The 4 large subunits of the cytochrome b6-f complex are cytochrome b6, subunit IV (17 kDa polypeptide, PetD), cytochrome f and the Rieske protein, while the 4 small subunits are PetG, PetL, PetM and PetN. The complex functions as a dimer. Heme b is required as a cofactor. The cofactor is heme c.

Its subcellular location is the cellular thylakoid membrane. In terms of biological role, component of the cytochrome b6-f complex, which mediates electron transfer between photosystem II (PSII) and photosystem I (PSI), cyclic electron flow around PSI, and state transitions. The sequence is that of Cytochrome b6 from Synechococcus elongatus.